A 368-amino-acid polypeptide reads, in one-letter code: 3-isopropylmalate dehydrogenase (368 aa).

Residue 79 to 91 (GPEWGTSSTVRPE) coordinates NAD(+). Arg98, Arg108, Arg137, and Asp226 together coordinate substrate. Asp226, Asp251, and Asp255 together coordinate Mg(2+). An NAD(+)-binding site is contributed by 291 to 303 (GSAPDISGKGIVN).

It belongs to the isocitrate and isopropylmalate dehydrogenases family. Homodimer. Mg(2+) serves as cofactor. The cofactor is Mn(2+).

It is found in the cytoplasm. It catalyses the reaction (2R,3S)-3-isopropylmalate + NAD(+) = 4-methyl-2-oxopentanoate + CO2 + NADH. It functions in the pathway amino-acid biosynthesis; L-leucine biosynthesis; L-leucine from 3-methyl-2-oxobutanoate: step 3/4. Catalyzes the oxidation of 3-carboxy-2-hydroxy-4-methylpentanoate (3-isopropylmalate) to 3-carboxy-4-methyl-2-oxopentanoate. The product decarboxylates to 4-methyl-2 oxopentanoate. The protein is 3-isopropylmalate dehydrogenase (leu-1) of Neurospora crassa (strain ATCC 24698 / 74-OR23-1A / CBS 708.71 / DSM 1257 / FGSC 987).